The chain runs to 131 residues: Monothiol glutaredoxin-S6 (131 aa).

The 101-residue stretch at 31–131 (SAFVQNAIYS…KLLGNSQSQR (101 aa)) folds into the Glutaredoxin domain. C51 provides a ligand contact to [2Fe-2S] cluster.

The protein belongs to the glutaredoxin family. CPYC subfamily.

The protein localises to the cytoplasm. Its function is as follows. May only reduce GSH-thiol disulfides, but not protein disulfides. This chain is Monothiol glutaredoxin-S6 (GRXS6), found in Oryza sativa subsp. japonica (Rice).